An 81-amino-acid polypeptide reads, in one-letter code: Costars family protein ABRACL (81 aa).

This sequence belongs to the costars family.

The sequence is that of Costars family protein ABRACL from Salmo salar (Atlantic salmon).